A 185-amino-acid polypeptide reads, in one-letter code: Elongation factor P (185 aa).

The protein belongs to the elongation factor P family.

It localises to the cytoplasm. It functions in the pathway protein biosynthesis; polypeptide chain elongation. Involved in peptide bond synthesis. Stimulates efficient translation and peptide-bond synthesis on native or reconstituted 70S ribosomes in vitro. Probably functions indirectly by altering the affinity of the ribosome for aminoacyl-tRNA, thus increasing their reactivity as acceptors for peptidyl transferase. In Limosilactobacillus fermentum (strain NBRC 3956 / LMG 18251) (Lactobacillus fermentum), this protein is Elongation factor P.